A 244-amino-acid polypeptide reads, in one-letter code: Fumarate reductase iron-sulfur subunit (244 aa).

Y14 serves as a coordination point for a menaquinone. Positions 16-97 (PEVDTAPHSA…GMKVEALANF (82 aa)) constitute a 2Fe-2S ferredoxin-type domain. Positions 58, 63, 66, and 78 each coordinate [2Fe-2S] cluster. The 4Fe-4S ferredoxin-type domain maps to 140-169 (MAKYHQFSGCINCGLCYAACPQFGLNPEFI). 3 residues coordinate [4Fe-4S] cluster: C149, C152, and C155. Residues C159, C205, and C211 each contribute to the [3Fe-4S] cluster site. C215 is a [4Fe-4S] cluster binding site. A menaquinone is bound at residue 226 to 229 (QQGK).

This sequence belongs to the succinate dehydrogenase/fumarate reductase iron-sulfur protein family. As to quaternary structure, fumarate dehydrogenase forms part of an enzyme complex containing four subunits: a flavoprotein, an iron-sulfur, and two hydrophobic anchor proteins. The cofactor is [2Fe-2S] cluster. It depends on [3Fe-4S] cluster as a cofactor. [4Fe-4S] cluster is required as a cofactor.

Its subcellular location is the cell inner membrane. It carries out the reaction a quinone + succinate = fumarate + a quinol. The catalysed reaction is a menaquinone + succinate = a menaquinol + fumarate. In terms of biological role, two distinct, membrane-bound, FAD-containing enzymes are responsible for the catalysis of fumarate and succinate interconversion; the fumarate reductase is used in anaerobic growth, and the succinate dehydrogenase is used in aerobic growth. The chain is Fumarate reductase iron-sulfur subunit (frdB) from Escherichia coli O157:H7.